The sequence spans 1164 residues: Nuclear exosome regulator NRDE2 (1164 aa).

2 disordered regions span residues 1–25 (MALFPAFAGLSEAPDGGSSRKELDW) and 39–149 (LSQQ…GHRF). The residue at position 2 (Ala2) is an N-acetylalanine. The span at 61 to 73 (LKSESSDESDTNK) shows a compositional bias: basic and acidic residues. A coiled-coil region spans residues 61–383 (LKSESSDESD…IESNQSSVDL (323 aa)). Residues 74 to 103 (KLKQTSRKKKKEKKKKRKHQHHKKTKRKHG) show a composition bias toward basic residues. Positions 110–133 (SETDTDSEKDKPSRGVGGSKKESE) are enriched in basic and acidic residues. An MID/MTR4-interacting domain region spans residues 163 to 266 (FRTDKKPDPA…KDLEDAAPVT (104 aa)). The tract at residues 279–305 (TTHWLQGQGPPEQESKQPDAQPDSESA) is disordered. 5 HAT repeats span residues 305–337 (AALKAKVEEFNRRVRENPRDTQLWMAFVAFQDE), 395–427 (WEPSTLVKEWQKLIFLHPNNTALWQKYLLFCQS), 758–792 (SQGKNCKKLAKNLLKEPENCNNFCLWKQYAHLEWL), 978–1010 (YPLAPLREALSQALKLYPGNQVLWRSYVQIQNK), and 1067–1101 (GLMHRIQALFENAMRSDSGSQCPLLWRMYLNFLVS).

This sequence belongs to the NRDE2 family. Interacts with MTREX; the interaction is direct and stabilizes NRDE2. Interacts with EXOSC10, EFTUD2 and EIF4A3.

It is found in the nucleus speckle. Its subcellular location is the nucleus. The protein resides in the nucleolus. The protein localises to the nucleoplasm. In terms of biological role, protein of the nuclear speckles that regulates RNA degradation and export from the nucleus through its interaction with MTREX an essential factor directing various RNAs to exosomal degradation. Changes the conformation of MTREX, precluding its association with the nuclear exosome and interaction with proteins required for its function in RNA exosomal degradation. Negatively regulates, for instance, the degradation of mRNAs and lncRNAs by inhibiting their MTREX-mediated recruitment to nuclear exosome. By preventing the degradation of RNAs in the nucleus, it promotes their export to the cytoplasm. U5 snRNP-associated RNA splicing factor which is required for efficient splicing of CEP131 pre-mRNA and plays an important role in centrosome maturation, integrity and function during mitosis. Suppresses intron retention in a subset of pre-mRNAs containing short, GC-rich introns with relatively weak 5' and 3' splice sites. Plays a role in DNA damage response. This chain is Nuclear exosome regulator NRDE2, found in Homo sapiens (Human).